A 517-amino-acid polypeptide reads, in one-letter code: Diacylglycerol O-acyltransferase 1C (517 aa).

The disordered stretch occupies residues 1–82 (MAISDVPAAA…NVGAAANDAG (82 aa)). Low complexity predominate over residues 8 to 17 (AAAGTTATTT). A compositionally biased stretch (basic and acidic residues) spans 53–64 (ITDDDNIKDHKP). Over residues 71-81 (DDNVGAAANDA) the composition is skewed to low complexity. 7 helical membrane-spanning segments follow: residues 121 to 141 (HAGL…RLII), 165 to 185 (WPLF…FVVE), 197 to 217 (VVVL…VLVI), 222 to 242 (SAFV…LKLV), 272 to 292 (YPYT…TLCY), 305 to 325 (GWVF…GFII), and 361 to 381 (VWLC…AELV). Residues 388-394 (FYKDWWN) carry the FYXDWWN motif motif. Transmembrane regions (helical) follow at residues 429–449 (GAAS…CIAV), 451–471 (CHMF…LVLI), and 484–504 (VGNM…SVLL). Residue His443 is part of the active site.

Belongs to the membrane-bound acyltransferase family. Sterol o-acyltransferase subfamily.

Its subcellular location is the endoplasmic reticulum membrane. The enzyme catalyses an acyl-CoA + a 1,2-diacyl-sn-glycerol = a triacyl-sn-glycerol + CoA. The protein operates within glycerolipid metabolism; triacylglycerol biosynthesis. Involved in triacylglycerol (TAG) synthesis. Catalyzes the acylation of the sn-3 hydroxy group of sn-1,2-diacylglycerol using acyl-CoA. This chain is Diacylglycerol O-acyltransferase 1C, found in Glycine max (Soybean).